We begin with the raw amino-acid sequence, 266 residues long: Putative pyruvate, phosphate dikinase regulatory protein (266 aa).

G147–T154 serves as a coordination point for ADP.

Belongs to the pyruvate, phosphate/water dikinase regulatory protein family. PDRP subfamily.

It carries out the reaction N(tele)-phospho-L-histidyl/L-threonyl-[pyruvate, phosphate dikinase] + ADP = N(tele)-phospho-L-histidyl/O-phospho-L-threonyl-[pyruvate, phosphate dikinase] + AMP + H(+). The catalysed reaction is N(tele)-phospho-L-histidyl/O-phospho-L-threonyl-[pyruvate, phosphate dikinase] + phosphate + H(+) = N(tele)-phospho-L-histidyl/L-threonyl-[pyruvate, phosphate dikinase] + diphosphate. Bifunctional serine/threonine kinase and phosphorylase involved in the regulation of the pyruvate, phosphate dikinase (PPDK) by catalyzing its phosphorylation/dephosphorylation. The sequence is that of Putative pyruvate, phosphate dikinase regulatory protein from Clostridium perfringens (strain SM101 / Type A).